We begin with the raw amino-acid sequence, 311 residues long: Acetyl-coenzyme A carboxylase carboxyl transferase subunit alpha (311 aa).

The CoA carboxyltransferase C-terminal domain occupies 36 to 286; that stretch reads ELKKEVERVY…VNYFLKSLEE (251 aa).

It belongs to the AccA family. Acetyl-CoA carboxylase is a heterohexamer composed of biotin carboxyl carrier protein (AccB), biotin carboxylase (AccC) and two subunits each of ACCase subunit alpha (AccA) and ACCase subunit beta (AccD).

It localises to the cytoplasm. It catalyses the reaction N(6)-carboxybiotinyl-L-lysyl-[protein] + acetyl-CoA = N(6)-biotinyl-L-lysyl-[protein] + malonyl-CoA. The protein operates within lipid metabolism; malonyl-CoA biosynthesis; malonyl-CoA from acetyl-CoA: step 1/1. In terms of biological role, component of the acetyl coenzyme A carboxylase (ACC) complex. First, biotin carboxylase catalyzes the carboxylation of biotin on its carrier protein (BCCP) and then the CO(2) group is transferred by the carboxyltransferase to acetyl-CoA to form malonyl-CoA. The polypeptide is Acetyl-coenzyme A carboxylase carboxyl transferase subunit alpha (Wolinella succinogenes (strain ATCC 29543 / DSM 1740 / CCUG 13145 / JCM 31913 / LMG 7466 / NCTC 11488 / FDC 602W) (Vibrio succinogenes)).